A 714-amino-acid chain; its full sequence is K(+)-insensitive pyrophosphate-energized proton pump (714 aa).

An N-terminal signal peptide occupies residues M1–A20. 4 helical membrane-spanning segments follow: residues L52–L74, G85–L105, I128–L148, and V166–F186. Residue K188 coordinates substrate. Mg(2+)-binding residues include D191, D195, N218, and D221. 6 helical membrane-spanning segments follow: residues A238–L258, V263–V283, G298–V318, G333–I353, G383–I403, and L411–L431. A Mg(2+)-binding site is contributed by D439. Helical transmembrane passes span A470 to A490, Y522 to M542, V591 to I611, and A618 to I638. Residues D648, D680, and D684 each coordinate Ca(2+). K687 provides a ligand contact to substrate. The helical transmembrane segment at A693 to A713 threads the bilayer.

It belongs to the H(+)-translocating pyrophosphatase (TC 3.A.10) family. K(+)-insensitive subfamily. As to quaternary structure, homodimer. Mg(2+) is required as a cofactor.

Its subcellular location is the acidocalcisome membrane. The catalysed reaction is diphosphate + H2O + H(+)(in) = 2 phosphate + 2 H(+)(out). Functionally, proton pump that utilizes the energy of pyrophosphate hydrolysis as the driving force for proton movement across the membrane. Generates a proton motive force. The sequence is that of K(+)-insensitive pyrophosphate-energized proton pump from Agrobacterium fabrum (strain C58 / ATCC 33970) (Agrobacterium tumefaciens (strain C58)).